We begin with the raw amino-acid sequence, 68 residues long: Large ribosomal subunit protein uL29 (68 aa).

Belongs to the universal ribosomal protein uL29 family.

The protein is Large ribosomal subunit protein uL29 of Nitrobacter winogradskyi (strain ATCC 25391 / DSM 10237 / CIP 104748 / NCIMB 11846 / Nb-255).